We begin with the raw amino-acid sequence, 664 residues long: Chaperone protein DnaK (664 aa).

The residue at position 201 (threonine 201) is a Phosphothreonine; by autocatalysis. The span at 574-592 (LKEDASTEKIKEASEELSR) shows a compositional bias: basic and acidic residues. A disordered region spans residues 574–664 (LKEDASTEKI…DVEIVDKPND (91 aa)). A compositionally biased stretch (low complexity) spans 600–617 (AMQSQSASAAPSSAANAQ). Residues 639-649 (GNSTSASSNNE) are compositionally biased toward polar residues.

Belongs to the heat shock protein 70 family.

Acts as a chaperone. The polypeptide is Chaperone protein DnaK (Chlamydia felis (strain Fe/C-56) (Chlamydophila felis)).